The primary structure comprises 141 residues: Nucleoside triphosphatase NudI (141 aa).

In terms of domain architecture, Nudix hydrolase spans 1 to 141 (MRQRTIVCPL…RKTLRLKGLL (141 aa)). Residues 38–59 (GGVEPGERIEEALRREIREELG) carry the Nudix box motif.

Belongs to the Nudix hydrolase family. NudI subfamily. In terms of assembly, monomer. Requires Mg(2+) as cofactor.

It catalyses the reaction a ribonucleoside 5'-triphosphate + H2O = a ribonucleoside 5'-phosphate + diphosphate + H(+). The enzyme catalyses a 2'-deoxyribonucleoside 5'-triphosphate + H2O = a 2'-deoxyribonucleoside 5'-phosphate + diphosphate + H(+). It carries out the reaction dUTP + H2O = dUMP + diphosphate + H(+). The catalysed reaction is dTTP + H2O = dTMP + diphosphate + H(+). It catalyses the reaction dCTP + H2O = dCMP + diphosphate + H(+). In terms of biological role, catalyzes the hydrolysis of nucleoside triphosphates, with a preference for pyrimidine deoxynucleoside triphosphates (dUTP, dTTP and dCTP). This Escherichia coli O6:K15:H31 (strain 536 / UPEC) protein is Nucleoside triphosphatase NudI.